Reading from the N-terminus, the 246-residue chain is MQIDLNADLGEGCGNDEALLALISSANVACGWHAGDAATMLQTVKWAIEKGVAIGAHPSFPDRENFGRTEMQRDPEAVYADVLYQIGALAAMVRAQGGQLHHVKPHGALYNQAARDPALAEAIVRAVRDFDSDLIFFGLAGSKMIDVARKAGLRVKEEVFADRGYNADGSLVKRGTPGALHEDEEVALNQTLTMVREQRVRAIDGNWVPIRAETVCLHGDGDHALAFARRIRERLGAEGIAVRAGA.

This sequence belongs to the LamB/PxpA family. In terms of assembly, forms a complex composed of PxpA, PxpB and PxpC.

It carries out the reaction 5-oxo-L-proline + ATP + 2 H2O = L-glutamate + ADP + phosphate + H(+). Its function is as follows. Catalyzes the cleavage of 5-oxoproline to form L-glutamate coupled to the hydrolysis of ATP to ADP and inorganic phosphate. In Cupriavidus pinatubonensis (strain JMP 134 / LMG 1197) (Cupriavidus necator (strain JMP 134)), this protein is 5-oxoprolinase subunit A.